Here is a 328-residue protein sequence, read N- to C-terminus: Bidirectional sugar transporter SWEET16 (328 aa).

Residues 1–5 (MADPS) lie on the Extracellular side of the membrane. The chain crosses the membrane as a helical span at residues 6–26 (FFVGIVGNVISILVFASPIAT). In terms of domain architecture, MtN3/slv 1 spans 6 to 92 (FFVGIVGNVI…TLYLAYAPRE (87 aa)). Over 27–38 (FRRIVRSKSTEE) the chain is Cytoplasmic. A helical membrane pass occupies residues 39-56 (FRWLPYVTTLLSTSLWTF). Residues 57–63 (YGLHKPG) lie on the Extracellular side of the membrane. Residues 64–84 (GLLIVTVNGSGAALEAIYVTL) form a helical membrane-spanning segment. The Cytoplasmic portion of the chain corresponds to 85–99 (YLAYAPRETKAKMVK). The helical transmembrane segment at 100 to 120 (VVLAVNVGALAAVVAVALVAL) threads the bilayer. Topologically, residues 121–125 (HGGVR) are extracellular. The helical transmembrane segment at 126-146 (LFVVGVLCAALTIGMYAAPMA) threads the bilayer. The region spanning 127-213 (FVVGVLCAAL…LYMAYRRTKK (87 aa)) is the MtN3/slv 2 domain. Residues 147-161 (AMRTVVKTRSVEYMP) are Cytoplasmic-facing. Residues 162 to 182 (FSLSFFLFLNGGVWSVYSLLV) form a helical membrane-spanning segment. The Extracellular segment spans residues 183 to 185 (KDY). The helical transmembrane segment at 186–206 (FIGIPNAIGFALGTAQLALYM) threads the bilayer. The Cytoplasmic segment spans residues 207-328 (AYRRTKKPAG…ATTAGPGDRH (122 aa)). Positions 288-299 (HQHHGGHHHHHR) are enriched in basic residues. The disordered stretch occupies residues 288–328 (HQHHGGHHHHHRFDTVPDDDDEAVAAGGTTPATTAGPGDRH). A compositionally biased stretch (low complexity) spans 312–328 (AAGGTTPATTAGPGDRH).

Belongs to the SWEET sugar transporter family. Forms homooligomers and/or heterooligomers.

Its subcellular location is the cell membrane. Its function is as follows. Mediates both low-affinity uptake and efflux of sugar across the plasma membrane. The chain is Bidirectional sugar transporter SWEET16 (SWEET16) from Oryza sativa subsp. japonica (Rice).